The primary structure comprises 367 residues: Riboflavin biosynthesis protein VVA0006 (367 aa).

215 to 219 (RLHSE) lines the GTP pocket. Residues Cys220, Cys231, and Cys233 each coordinate Zn(2+). GTP is bound by residues Gln236, 258–260 (EGR), and Thr280. The Proton acceptor role is filled by Asp292. Arg294 functions as the Nucleophile in the catalytic mechanism. Positions 315 and 320 each coordinate GTP.

This sequence in the N-terminal section; belongs to the YbiA family. In the C-terminal section; belongs to the GTP cyclohydrolase II family. It depends on Zn(2+) as a cofactor.

The catalysed reaction is 2,5-diamino-6-hydroxy-4-(5-phosphoribosylamino)-pyrimidine + H2O = 2,5,6-triamino-4-hydroxypyrimidine + D-ribose 5-phosphate. It catalyses the reaction 5-amino-6-(5-phospho-D-ribosylamino)uracil + H2O = 5,6-diaminouracil + D-ribose 5-phosphate. It carries out the reaction GTP + 4 H2O = 2,5-diamino-6-hydroxy-4-(5-phosphoribosylamino)-pyrimidine + formate + 2 phosphate + 3 H(+). Its pathway is cofactor biosynthesis; riboflavin biosynthesis; 5-amino-6-(D-ribitylamino)uracil from GTP: step 1/4. In terms of biological role, catalyzes the hydrolysis of the N-glycosidic bond in the first two intermediates of riboflavin biosynthesis, which are highly reactive metabolites, yielding relatively innocuous products. Thus, can divert a surplus of harmful intermediates into relatively harmless products and pre-empt the damage these intermediates would otherwise do. Has no activity against GTP, nucleoside monophosphates or ADP-ribose. Functionally, catalyzes the conversion of GTP to 2,5-diamino-6-ribosylamino-4(3H)-pyrimidinone 5'-phosphate (DARP), formate and pyrophosphate. In Vibrio vulnificus (strain YJ016), this protein is Riboflavin biosynthesis protein VVA0006.